A 290-amino-acid polypeptide reads, in one-letter code: Pyridoxal kinase PdxY (290 aa).

Substrate contacts are provided by residues Ser-9 and 44–45; that span reads TQ. The ATP site is built by Asp-112, Val-144, Glu-149, and Lys-182. Position 221 (Asp-221) interacts with substrate.

It belongs to the pyridoxine kinase family. PdxY subfamily. Homodimer. Mg(2+) serves as cofactor.

It catalyses the reaction pyridoxal + ATP = pyridoxal 5'-phosphate + ADP + H(+). Its pathway is cofactor metabolism; pyridoxal 5'-phosphate salvage; pyridoxal 5'-phosphate from pyridoxal: step 1/1. Its function is as follows. Pyridoxal kinase involved in the salvage pathway of pyridoxal 5'-phosphate (PLP). Catalyzes the phosphorylation of pyridoxal to PLP. This is Pyridoxal kinase PdxY from Vibrio vulnificus (strain CMCP6).